Consider the following 187-residue polypeptide: Ribosome-recycling factor (187 aa).

This sequence belongs to the RRF family.

It is found in the cytoplasm. Responsible for the release of ribosomes from messenger RNA at the termination of protein biosynthesis. May increase the efficiency of translation by recycling ribosomes from one round of translation to another. The protein is Ribosome-recycling factor of Rhodopseudomonas palustris (strain BisB18).